A 571-amino-acid chain; its full sequence is 5' exonuclease Apollo (571 aa).

Disordered regions lie at residues 346-386 (TSRP…TDRN) and 431-487 (MDDN…SMHD). Basic and acidic residues-rich tracts occupy residues 367–386 (NHDD…TDRN) and 453–468 (ECDH…EKSP). The segment covering 470 to 487 (MGSTNSGEMCSSMDSMHD) has biased composition (polar residues). The TBM signature appears at 501–532 (NPQSVTSAIPITLESEQFEHWLLENFTIPAEE).

Belongs to the DNA repair metallo-beta-lactamase (DRMBL) family. In terms of assembly, interacts with terf2; the interaction is direct.

The protein localises to the chromosome. The protein resides in the telomere. It localises to the nucleus. It catalyses the reaction a beta-lactam + H2O = a substituted beta-amino acid. Its function is as follows. 5'-3' exonuclease that plays a central role in telomere maintenance and protection during S-phase. Participates in the protection of telomeres against non-homologous end-joining (NHEJ)-mediated repair, thereby ensuring that telomeres do not fuse. Plays a key role in telomeric loop (T loop) formation by being recruited by terf2 at the leading end telomeres and by processing leading-end telomeres immediately after their replication via its exonuclease activity: generates 3' single-stranded overhang at the leading end telomeres avoiding blunt leading-end telomeres that are vulnerable to end-joining reactions and expose the telomere end in a manner that activates the DNA repair pathways. Possesses beta-lactamase activity, catalyzing the hydrolysis of penicillin G and nitrocefin. Exhibits no activity towards other beta-lactam antibiotic classes including cephalosporins (cefotaxime) and carbapenems (imipenem). The sequence is that of 5' exonuclease Apollo (dclre1b) from Danio rerio (Zebrafish).